The chain runs to 240 residues: Probable ATP synthase 24 kDa subunit, mitochondrial (240 aa).

The N-terminal 32 residues, 1 to 32, are a transit peptide targeting the mitochondrion; that stretch reads MAYASRFLSRSKQLQGGLVILQQQHAIPVRAF. Composition is skewed to basic and acidic residues over residues 210–222 and 229–240; these read AVEAMESQKKKEE and PDVKSLDIRNFI. The interval 210 to 240 is disordered; sequence AVEAMESQKKKEEFQDEEMPDVKSLDIRNFI.

It localises to the mitochondrion. The protein localises to the mitochondrion inner membrane. In terms of biological role, mitochondrial membrane ATP synthase (F(1)F(0) ATP synthase or Complex V) produces ATP from ADP in the presence of a proton gradient across the membrane which is generated by electron transport complexes of the respiratory chain. F-type ATPases consist of two structural domains, F(1) - containing the extramembraneous catalytic core and F(0) - containing the membrane proton channel, linked together by a central stalk and a peripheral stalk. During catalysis, ATP synthesis in the catalytic domain of F(1) is coupled via a rotary mechanism of the central stalk subunits to proton translocation. Part of the complex F(0) domain. This Arabidopsis thaliana (Mouse-ear cress) protein is Probable ATP synthase 24 kDa subunit, mitochondrial.